The primary structure comprises 1138 residues: Pesticidal crystal protein Cry7Ab (1138 aa).

This sequence belongs to the delta endotoxin family.

Promotes colloidosmotic lysis by binding to the midgut epithelial cells of Coleoptera. The protein is Pesticidal crystal protein Cry7Ab (cry7Ab) of Bacillus thuringiensis serovar kumamotoensis.